A 208-amino-acid chain; its full sequence is MEVNVVNIKNEVVGKVQLSAEVFGVQLRRDVLRDVVTWQLAKRRAGTHKTRCISDVSGTTAKPYRQKHTGRARQGSLRSPQFRGGAVVFGPVNRSHAYSLNKKVRRLGLKVALSMKVSDSKLVVLDDSGLLLEKTADAHVAFGNFGAHGSYLVVAETYEDKVMCACRNLPNVDLLKYAGINVLDILRHDCVILTVGTVKCLESRLCNG.

This sequence belongs to the universal ribosomal protein uL4 family. As to quaternary structure, part of the 50S ribosomal subunit.

Functionally, one of the primary rRNA binding proteins, this protein initially binds near the 5'-end of the 23S rRNA. It is important during the early stages of 50S assembly. It makes multiple contacts with different domains of the 23S rRNA in the assembled 50S subunit and ribosome. In terms of biological role, forms part of the polypeptide exit tunnel. This Anaplasma marginale (strain Florida) protein is Large ribosomal subunit protein uL4.